Here is a 144-residue protein sequence, read N- to C-terminus: Large ribosomal subunit protein uL13 (144 aa).

Belongs to the universal ribosomal protein uL13 family. As to quaternary structure, part of the 50S ribosomal subunit.

This protein is one of the early assembly proteins of the 50S ribosomal subunit, although it is not seen to bind rRNA by itself. It is important during the early stages of 50S assembly. This Clostridium perfringens (strain 13 / Type A) protein is Large ribosomal subunit protein uL13.